The chain runs to 261 residues: Orotidine 5'-phosphate decarboxylase (261 aa).

Substrate is bound by residues Asp34, Lys56 to His58, Asp88 to Thr97, Tyr214, and Arg232. Lys90 serves as the catalytic Proton donor.

The protein belongs to the OMP decarboxylase family.

The catalysed reaction is orotidine 5'-phosphate + H(+) = UMP + CO2. Its pathway is pyrimidine metabolism; UMP biosynthesis via de novo pathway; UMP from orotate: step 2/2. This chain is Orotidine 5'-phosphate decarboxylase (URA3), found in Kodamaea ohmeri (Yeast).